The sequence spans 501 residues: Ell-associated factor Eaf (501 aa).

Polar residues-rich tracts occupy residues 138 to 149 and 173 to 192; these read NMGQGQLHSQGA and ENST…SRRN. 2 disordered regions span residues 138-226 and 256-501; these read NMGQ…PAWD and GHAN…DDDD. Composition is skewed to low complexity over residues 200–221 and 256–270; these read RNSP…SPQS and GHAN…SATG. Ser202 carries the phosphoserine modification. Residues 271–283 show a composition bias toward polar residues; that stretch reads QTDFGSISSSSHI. Low complexity-rich tracts occupy residues 302 to 314 and 329 to 343; these read QRQS…QQQP and QQQR…QRPP. Over residues 393 to 408 the composition is skewed to acidic residues; sequence DSSDSDSGSDSDDSTE. Low complexity-rich tracts occupy residues 416-437, 455-471, and 483-501; these read QQPV…HLNQ, QQQQ…QKQQ, and NDLL…DDDD.

This sequence belongs to the EAF family.

It localises to the nucleus. Promotes transcriptional elongation by Su(Tpl)/ELL. Essential for development. The protein is Ell-associated factor Eaf of Drosophila yakuba (Fruit fly).